Here is a 177-residue protein sequence, read N- to C-terminus: LOB domain-containing protein 33 (177 aa).

Residues 6 to 108 (SSCGACKFLR…EEIEFLGSQM (103 aa)) form the LOB domain.

The protein belongs to the LOB domain-containing protein family. Expressed in roots.

This is LOB domain-containing protein 33 (LBD33) from Arabidopsis thaliana (Mouse-ear cress).